Reading from the N-terminus, the 222-residue chain is uncharacterized protein (222 aa).

The segment at 142-222 is disordered; it reads ARRGGCVHPP…LPDPPSAGHL (81 aa). Over residues 160 to 169 the composition is skewed to low complexity; sequence QSRSISSRRA. Residues 182 to 196 are compositionally biased toward basic residues; that stretch reads PRRRPHRHRTRPQTR.

Belongs to the Rv1128c/1148c/1588c/1702c/1945/3466 family.

This is an uncharacterized protein from Mycobacterium tuberculosis (strain CDC 1551 / Oshkosh).